The primary structure comprises 424 residues: Arogenate dehydratase 1 (424 aa).

The transit peptide at 1–52 directs the protein to the chloroplast; that stretch reads MQSLTPSSGVNLKSIIRKTSLPPGQTRFITGRVIKCGYQVDSANTVNTAGAP. In terms of domain architecture, Prephenate dehydratase spans 131 to 308; it reads RVAYQGVPGA…NVTRFVMLAR (178 aa). The 92-residue stretch at 321 to 412 folds into the ACT domain; sequence TSIVFAHEGT…SFLRVLGSYP (92 aa).

In terms of tissue distribution, mostly expressed in flowers, especially in petals (corollas and tubes), and, at low levels, in roots, stems, leaves, pistils, stamens, ovaries and sepals.

It is found in the plastid. Its subcellular location is the chloroplast stroma. It carries out the reaction L-arogenate + H(+) = L-phenylalanine + CO2 + H2O. Its pathway is amino-acid biosynthesis; L-phenylalanine biosynthesis; L-phenylalanine from L-arogenate: step 1/1. Its function is as follows. Converts L-arogenate produced from the shikimate-chorismate pathway into phenylalanine (Phe). Involved in floral volatile benzenoids and phenylpropanoids (FVBP) production. This is Arogenate dehydratase 1 from Petunia hybrida (Petunia).